An 82-amino-acid chain; its full sequence is Polyferredoxin protein FwdG (82 aa).

2 4Fe-4S ferredoxin-type domains span residues 4-33 and 51-80; these read YELV…PETW and VVTV…LVFK. Residues Cys-13, Cys-16, Cys-19, Cys-23, Cys-60, Cys-63, Cys-66, and Cys-70 each coordinate [4Fe-4S] cluster.

The cofactor is [4Fe-4S] cluster.

The chain is Polyferredoxin protein FwdG (fwdG) from Methanocaldococcus jannaschii (strain ATCC 43067 / DSM 2661 / JAL-1 / JCM 10045 / NBRC 100440) (Methanococcus jannaschii).